The chain runs to 231 residues: Adenosine 5'-phosphosulfate reductase (231 aa).

4 residues coordinate [4Fe-4S] cluster: C118, C119, C201, and C204. C227 acts as the Nucleophile; cysteine thiosulfonate intermediate in catalysis.

The protein belongs to the PAPS reductase family. CysH subfamily. [4Fe-4S] cluster serves as cofactor.

It is found in the cytoplasm. It catalyses the reaction [thioredoxin]-disulfide + sulfite + AMP + 2 H(+) = adenosine 5'-phosphosulfate + [thioredoxin]-dithiol. The protein operates within sulfur metabolism; hydrogen sulfide biosynthesis; sulfite from sulfate. Functionally, catalyzes the formation of sulfite from adenosine 5'-phosphosulfate (APS) using thioredoxin as an electron donor. The sequence is that of Adenosine 5'-phosphosulfate reductase from Halalkalibacterium halodurans (strain ATCC BAA-125 / DSM 18197 / FERM 7344 / JCM 9153 / C-125) (Bacillus halodurans).